A 331-amino-acid polypeptide reads, in one-letter code: 4-hydroxythreonine-4-phosphate dehydrogenase (331 aa).

Substrate is bound by residues H137 and T138. Residues H167, H212, and H267 each coordinate a divalent metal cation. Substrate-binding residues include K275, N284, and R293.

Belongs to the PdxA family. In terms of assembly, homodimer. Zn(2+) serves as cofactor. The cofactor is Mg(2+). Co(2+) is required as a cofactor.

The protein resides in the cytoplasm. The catalysed reaction is 4-(phosphooxy)-L-threonine + NAD(+) = 3-amino-2-oxopropyl phosphate + CO2 + NADH. It participates in cofactor biosynthesis; pyridoxine 5'-phosphate biosynthesis; pyridoxine 5'-phosphate from D-erythrose 4-phosphate: step 4/5. Catalyzes the NAD(P)-dependent oxidation of 4-(phosphooxy)-L-threonine (HTP) into 2-amino-3-oxo-4-(phosphooxy)butyric acid which spontaneously decarboxylates to form 3-amino-2-oxopropyl phosphate (AHAP). In Yersinia pseudotuberculosis serotype I (strain IP32953), this protein is 4-hydroxythreonine-4-phosphate dehydrogenase.